The following is a 91-amino-acid chain: MKRVRAHLRIYGRVQGVGFRWSMSREARKLGVHGWVRNLPDGTVEAVIEGDPERVEALIGWAHQGPPLARVTRVEVKWEEPEGLEGFKVVG.

One can recognise an Acylphosphatase-like domain in the interval 5–91; that stretch reads RAHLRIYGRV…EGLEGFKVVG (87 aa). Active-site residues include arginine 20 and asparagine 38.

Belongs to the acylphosphatase family.

The catalysed reaction is an acyl phosphate + H2O = a carboxylate + phosphate + H(+). The chain is Acylphosphatase (acyP) from Thermococcus kodakarensis (strain ATCC BAA-918 / JCM 12380 / KOD1) (Pyrococcus kodakaraensis (strain KOD1)).